A 459-amino-acid polypeptide reads, in one-letter code: Cysteine desulfurase (459 aa).

The transit peptide at 1-17 directs the protein to the mitochondrion; that stretch reads MVGSVAGNMLLRAAWRR. Pyridoxal 5'-phosphate is bound by residues A129, T130, Q237, S257, and H259. Position 260 is an N6-(pyridoxal phosphate)lysine (K260). T297 lines the pyridoxal 5'-phosphate pocket. The active-site Cysteine persulfide intermediate is the C383. C383 contacts [2Fe-2S] cluster. C383 contributes to the Zn(2+) binding site. Cysteine persulfide is present on C383.

This sequence belongs to the class-V pyridoxal-phosphate-dependent aminotransferase family. NifS/IscS subfamily. As to quaternary structure, homodimer. Component of the mitochondrial core iron-sulfur cluster (ISC) complex composed of NFS1, LYRM4, NDUFAB1, ISCU, FXN, and FDX2; this complex is a heterohexamer containing two copies of each monomer. Component of cyteine desulfurase complex composed of NFS1, LYRM4 and NDUFAB1; this complex contributes to the activation of cysteine desulfurase activity and NFS1 stabilization. Interacts (homodimer form) with ISCU (D-state); each monomer interacts with the C-terminal regions of each NFS1 monomer. Interacts with HSPA9. Interacts (via homodimer form) with FDX2. Interacts (via homodimer form) with FXN. Interacts with LYRM4. Component of a complex composed of FXN, NFS1, LYRM4 and ISCU. The cofactor is pyridoxal 5'-phosphate. Post-translationally, N-gluconoylated. In terms of processing, cysteine persulfide intermediate is reduced by thiol-containing molecules like glutathione and L-cysteine. Persulfide reduction is a rate-limiting step of cysteine desulfurase catalytic cycle. As to expression, ubiquitous.

It localises to the mitochondrion. It carries out the reaction (sulfur carrier)-H + L-cysteine = (sulfur carrier)-SH + L-alanine. The enzyme catalyses L-cysteinyl-[cysteine desulfurase] + L-cysteine = S-sulfanyl-L-cysteinyl-[cysteine desulfurase] + L-alanine. With respect to regulation, active only in complex with LYRM4. Functionally, mitochondrial cysteine desulfurase, of the core iron-sulfur cluster (ISC) assembly complex, that catalyzes the desulfuration of L-cysteine to L-alanine, as component of the cysteine desulfurase complex, leading to the formation of a cysteine persulfide intermediate at the active site cysteine residue and participates in the [2Fe-2S] clusters assembly on the scaffolding protein ISCU. The persulfide is then transferred on the flexible Cys loop from the catalytic site of NFS1 to the surface of NFS1. After the NFS1-linked persulfide sulfur is transferred to one of the conserved Cys residues of the scaffold, a reaction assisted by FXN. The core iron-sulfur cluster (ISC) assembly complex is involved in the de novo synthesis of a [2Fe-2S] cluster, the first step of the mitochondrial iron-sulfur protein biogenesis. This process is initiated by the cysteine desulfurase complex (NFS1:LYRM4:NDUFAB1) that produces persulfide which is delivered on the scaffold protein ISCU in a FXN-dependent manner. Then this complex is stabilized by FDX2 which provides reducing equivalents to accomplish the [2Fe-2S] cluster assembly. Finally, the [2Fe-2S] cluster is transferred from ISCU to chaperone proteins, including HSCB, HSPA9 and GLRX5. The sequence is that of Cysteine desulfurase from Mus musculus (Mouse).